We begin with the raw amino-acid sequence, 63 residues long: MIFSELTTAEIETKVKALKEELFNLRLQLATGQLENPTRIREVRKAIARMKTVVREREIGINR.

Belongs to the universal ribosomal protein uL29 family.

The protein is Large ribosomal subunit protein uL29 of Bacillus cereus (strain ATCC 14579 / DSM 31 / CCUG 7414 / JCM 2152 / NBRC 15305 / NCIMB 9373 / NCTC 2599 / NRRL B-3711).